Here is a 1269-residue protein sequence, read N- to C-terminus: Clustered mitochondria protein homolog (1269 aa).

The 256-residue stretch at 297 to 552 (PSNNGDFMRT…NTNPVDIEFV (256 aa)) folds into the Clu domain. Residues 958–969 (EKKKEESKKAAA) show a composition bias toward basic and acidic residues. The segment at 958–989 (EKKKEESKKAAADGEDAGSSGATSKEEEQAKE) is disordered. TPR repeat units lie at residues 1020-1053 (VSSY…SERC) and 1147-1180 (GQNE…FSKE). The segment at 1211-1269 (LASAQQATKPANISQKKGKKSSSSSPALTNKSVDELLQFIEGPGASKSSKKSKKKHTKN) is disordered. Residues 1213 to 1223 (SAQQATKPANI) show a composition bias toward polar residues. The segment covering 1258-1269 (SSKKSKKKHTKN) has biased composition (basic residues).

The protein belongs to the CLU family. May associate with the eukaryotic translation initiation factor 3 (eIF-3) complex.

It localises to the cytoplasm. Functionally, mRNA-binding protein involved in proper cytoplasmic distribution of mitochondria. The polypeptide is Clustered mitochondria protein homolog (Kluyveromyces lactis (strain ATCC 8585 / CBS 2359 / DSM 70799 / NBRC 1267 / NRRL Y-1140 / WM37) (Yeast)).